The primary structure comprises 1388 residues: DNA-directed RNA polymerase subunit beta' (1388 aa).

Positions 70, 72, 85, and 88 each coordinate Zn(2+). The Mg(2+) site is built by Asp-461, Asp-463, and Asp-465. Zn(2+) contacts are provided by Cys-808, Cys-882, Cys-889, and Cys-892.

This sequence belongs to the RNA polymerase beta' chain family. As to quaternary structure, the RNAP catalytic core consists of 2 alpha, 1 beta, 1 beta' and 1 omega subunit. When a sigma factor is associated with the core the holoenzyme is formed, which can initiate transcription. Mg(2+) serves as cofactor. It depends on Zn(2+) as a cofactor.

It catalyses the reaction RNA(n) + a ribonucleoside 5'-triphosphate = RNA(n+1) + diphosphate. In terms of biological role, DNA-dependent RNA polymerase catalyzes the transcription of DNA into RNA using the four ribonucleoside triphosphates as substrates. The sequence is that of DNA-directed RNA polymerase subunit beta' from Acidiphilium cryptum (strain JF-5).